The primary structure comprises 291 residues: Early E4 34 kDa protein (291 aa).

The protein belongs to the adenoviridae E4 30 to 34 kDa protein family. In terms of assembly, interacts with E1B-55k.

Its subcellular location is the host nucleus. The protein localises to the host cytoplasm. Functionally, plays a major role to prevent cellular inhibition of viral genome replication by nuclear bodies. Assembles an SCF-like E3 ubiquitin ligase complex based on the cellular proteins ELOB, ELOC, CUL5 and RBX1, in cooperation with viral E1B-55K. This viral RING-type ligase ubiquitinates cellular substrates prior to proteasomal degradation: p53/TP53, LIG4, MRE11-RAD50-NBS1 (MRN) complex, ITGA3, DAXX and BLM. The protein is Early E4 34 kDa protein of Homo sapiens (Human).